Consider the following 426-residue polypeptide: 3-phosphoshikimate 1-carboxyvinyltransferase (426 aa).

K22, S23, and R27 together coordinate 3-phosphoshikimate. K22 lines the phosphoenolpyruvate pocket. The phosphoenolpyruvate site is built by G96 and R124. The 3-phosphoshikimate site is built by S170, S171, Q172, S198, D314, N337, and K341. Q172 contributes to the phosphoenolpyruvate binding site. Residue D314 is the Proton acceptor of the active site. The phosphoenolpyruvate site is built by R345, R387, and K412.

It belongs to the EPSP synthase family. In terms of assembly, monomer.

Its subcellular location is the cytoplasm. The enzyme catalyses 3-phosphoshikimate + phosphoenolpyruvate = 5-O-(1-carboxyvinyl)-3-phosphoshikimate + phosphate. It participates in metabolic intermediate biosynthesis; chorismate biosynthesis; chorismate from D-erythrose 4-phosphate and phosphoenolpyruvate: step 6/7. Functionally, catalyzes the transfer of the enolpyruvyl moiety of phosphoenolpyruvate (PEP) to the 5-hydroxyl of shikimate-3-phosphate (S3P) to produce enolpyruvyl shikimate-3-phosphate and inorganic phosphate. This Vibrio atlanticus (strain LGP32) (Vibrio splendidus (strain Mel32)) protein is 3-phosphoshikimate 1-carboxyvinyltransferase.